Reading from the N-terminus, the 331-residue chain is MKQTVYIASPESQQIHVWNLNHEGALTLTQVVDVPGQVQPMVVSPDKRYLYVGVRPEFRVLAYRIAPDDGALTFAAESALPGSPTHISTDHLGQFVFVGSYNAGNVSVTRLEDGLPVGVVDVVEGLDGCHSANISPDNRTLWVPALKQDRICLFTVSDDGHLVAQDPAEVTTVEGAGPRHMVFHPNEQYAYCVNELNSSVDVWELKDPHGNIECVQTLDMMPENFSDTRWAADIHITPDGRHLYACDRTASLITVFSVSEDGSVLSKEGFQPTETQPRGFNVDHSGKYLIAAGQKSHHISVYEIVGEQGLLHEKGRYAVGQGPMWVVVNAH.

Lys-287 bears the N6-acetyllysine mark.

Belongs to the cycloisomerase 2 family.

It carries out the reaction 6-phospho-D-glucono-1,5-lactone + H2O = 6-phospho-D-gluconate + H(+). It functions in the pathway carbohydrate degradation; pentose phosphate pathway; D-ribulose 5-phosphate from D-glucose 6-phosphate (oxidative stage): step 2/3. Functionally, catalyzes the hydrolysis of 6-phosphogluconolactone to 6-phosphogluconate. This Escherichia coli O127:H6 (strain E2348/69 / EPEC) protein is 6-phosphogluconolactonase.